A 586-amino-acid polypeptide reads, in one-letter code: Probable lysosomal cobalamin transporter (586 aa).

The next 9 helical transmembrane spans lie at 10–30, 47–67, 96–116, 147–167, 191–211, 315–335, 378–398, 420–440, and 509–529; these read IWIA…VTTF, VVSL…IALV, IVYY…IPFA, SGFI…PAAG, ALTF…VLYT, LVGG…MLIT, IIMA…LATV, ILIA…SIAM, and VFGA…LIVL. A glycan (N-linked (GlcNAc...) asparagine) is linked at N540.

The protein belongs to the LIMR family. LMBRD1 subfamily.

The protein localises to the lysosome membrane. Probable lysosomal cobalamin transporter. Required to export cobalamin from lysosomes allowing its conversion to cofactors. In Pyricularia oryzae (strain 70-15 / ATCC MYA-4617 / FGSC 8958) (Rice blast fungus), this protein is Probable lysosomal cobalamin transporter.